The primary structure comprises 364 residues: UDP-N-acetylenolpyruvoylglucosamine reductase (364 aa).

The FAD-binding PCMH-type domain occupies 30 to 196 (LGGPATRLIT…LRVRFELEDA (167 aa)). R173 is an active-site residue. Catalysis depends on S252, which acts as the Proton donor. Residue E356 is part of the active site.

It belongs to the MurB family. It depends on FAD as a cofactor.

The protein resides in the cytoplasm. The catalysed reaction is UDP-N-acetyl-alpha-D-muramate + NADP(+) = UDP-N-acetyl-3-O-(1-carboxyvinyl)-alpha-D-glucosamine + NADPH + H(+). It functions in the pathway cell wall biogenesis; peptidoglycan biosynthesis. In terms of biological role, cell wall formation. The sequence is that of UDP-N-acetylenolpyruvoylglucosamine reductase from Streptomyces avermitilis (strain ATCC 31267 / DSM 46492 / JCM 5070 / NBRC 14893 / NCIMB 12804 / NRRL 8165 / MA-4680).